Consider the following 119-residue polypeptide: DNA-directed RNA polymerase subunit omega (119 aa).

Belongs to the RNA polymerase subunit omega family. In terms of assembly, the RNAP catalytic core consists of 2 alpha, 1 beta, 1 beta' and 1 omega subunit. When a sigma factor is associated with the core the holoenzyme is formed, which can initiate transcription.

The catalysed reaction is RNA(n) + a ribonucleoside 5'-triphosphate = RNA(n+1) + diphosphate. Promotes RNA polymerase assembly. Latches the N- and C-terminal regions of the beta' subunit thereby facilitating its interaction with the beta and alpha subunits. This Caulobacter vibrioides (strain ATCC 19089 / CIP 103742 / CB 15) (Caulobacter crescentus) protein is DNA-directed RNA polymerase subunit omega (rpoZ).